Consider the following 429-residue polypeptide: Histidine--tRNA ligase (429 aa).

It belongs to the class-II aminoacyl-tRNA synthetase family. Homodimer.

It localises to the cytoplasm. The catalysed reaction is tRNA(His) + L-histidine + ATP = L-histidyl-tRNA(His) + AMP + diphosphate + H(+). The polypeptide is Histidine--tRNA ligase (Stutzerimonas stutzeri (strain A1501) (Pseudomonas stutzeri)).